A 388-amino-acid chain; its full sequence is Flavin-dependent monooxygenase (388 aa).

Residue Arg54 coordinates NADPH. Residues Asp61, Arg117, and Asp311 each contribute to the FAD site.

The protein belongs to the aromatic-ring hydroxylase family. TetX subfamily. As to quaternary structure, monomer. The cofactor is FAD.

The protein resides in the cytoplasm. The enzyme catalyses a tetracycline + NADPH + O2 + H(+) = an 11a-hydroxytetracycline + NADP(+) + H2O. It carries out the reaction tetracycline + NADPH + O2 + H(+) = 11a-hydroxytetracycline + NADP(+) + H2O. The catalysed reaction is oxytetracycline + NADPH + O2 + H(+) = 11a-hydroxy-oxytetracycline + NADP(+) + H2O. An FAD-requiring monooxygenase active on some tetracycline antibiotic derivatives, which leads to their inactivation. Hydroxylates carbon 11a of tetracycline and some analogs. In terms of biological role, confers resistance to tetracycline via an oxidoreductase activity; NADPH is more active than NAD. Expression in E.coli leads to breakdown of tetracycline. Confers resistance to doxycycline, chlortetracycline, oxytetracycline and minocycline. The sequence is that of Flavin-dependent monooxygenase from Bacteroides fragilis.